Consider the following 306-residue polypeptide: tRNA pseudouridine synthase B (306 aa).

The active-site Nucleophile is the aspartate 39.

It belongs to the pseudouridine synthase TruB family. Type 1 subfamily.

It catalyses the reaction uridine(55) in tRNA = pseudouridine(55) in tRNA. Responsible for synthesis of pseudouridine from uracil-55 in the psi GC loop of transfer RNAs. This Arthrobacter sp. (strain FB24) protein is tRNA pseudouridine synthase B.